A 400-amino-acid chain; its full sequence is Dual specificity mitogen-activated protein kinase kinase 2 (400 aa).

Methionine 1 is modified (N-acetylmethionine). Serine 23 carries the post-translational modification Phosphoserine. The Protein kinase domain occupies 72–369 (FERISELGAG…LKMLMSHTFI (298 aa)). ATP-binding positions include 78-86 (LGAGNGGVV) and lysine 101. Aspartate 194 acts as the Proton acceptor in catalysis. Serine 222 is modified (phosphoserine; by RAF). 4 positions are modified to phosphoserine: serine 226, serine 293, serine 295, and serine 306. A disordered region spans residues 288–309 (EGEPHSISPRPRPPGRPISGHG). A phosphothreonine mark is found at threonine 394 and threonine 396.

This sequence belongs to the protein kinase superfamily. STE Ser/Thr protein kinase family. MAP kinase kinase subfamily. In terms of assembly, interacts with MORG1. Interacts with SGK1. Interacts with KSR1. Interacts with KSR1 and BRAF; the interaction with KSR1 mediates KSR1-BRAF dimerization. Interacts with GLS. It depends on Mg(2+) as a cofactor. Post-translationally, MAPKK is itself dependent on Ser/Thr phosphorylation for activity catalyzed by MAP kinase kinase kinases (RAF or MEKK1).

Its subcellular location is the cytoplasm. It localises to the membrane. The catalysed reaction is L-seryl-[protein] + ATP = O-phospho-L-seryl-[protein] + ADP + H(+). It catalyses the reaction L-threonyl-[protein] + ATP = O-phospho-L-threonyl-[protein] + ADP + H(+). The enzyme catalyses L-tyrosyl-[protein] + ATP = O-phospho-L-tyrosyl-[protein] + ADP + H(+). Its function is as follows. Catalyzes the concomitant phosphorylation of a threonine and a tyrosine residue in a Thr-Glu-Tyr sequence located in MAP kinases. Activates the ERK1 and ERK2 MAP kinases. Activates BRAF in a KSR1 or KSR2-dependent manner; by binding to KSR1 or KSR2 releases the inhibitory intramolecular interaction between KSR1 or KSR2 protein kinase and N-terminal domains which promotes KSR1 or KSR2-BRAF dimerization and BRAF activation. This chain is Dual specificity mitogen-activated protein kinase kinase 2 (MAP2K2), found in Canis lupus familiaris (Dog).